We begin with the raw amino-acid sequence, 264 residues long: GATA transcription factor 2 (264 aa).

The span at 29-42 (SSSGGSTAATSSSS) shows a compositional bias: low complexity. Disordered stretches follow at residues 29–57 (SSSG…HHLP) and 96–192 (NPLG…TPQW). The span at 101–110 (TMTSVKTETS) shows a compositional bias: polar residues. The Nuclear localization signal signature appears at 114–121 (KPRSKRSR). Residues 155 to 164 (SGGGGGGGGR) are compositionally biased toward gly residues. The segment at 175-229 (GGGMRRCTHCASEKTPQWRTGPLGPKTLCNACGVRFKSGRLVPEYRPASSPTFVL) adopts a GATA-type zinc-finger fold.

This sequence belongs to the type IV zinc-finger family. Class A subfamily. Mostly expressed in roots. Also expressed in flowers and leaves, and to a lower extent in stems.

Its subcellular location is the nucleus. Functionally, transcriptional activator that specifically binds 5'-GATA-3' or 5'-GAT-3' motifs within gene promoters. May be involved in the regulation of some light-responsive genes. The protein is GATA transcription factor 2 (GATA2) of Arabidopsis thaliana (Mouse-ear cress).